A 189-amino-acid polypeptide reads, in one-letter code: Phosphoheptose isomerase (189 aa).

The SIS domain maps to 34 to 189 (AVETLKNGNK…CQIIDNELSH (156 aa)). 49-51 (NGG) provides a ligand contact to substrate. Histidine 58 and glutamate 62 together coordinate Zn(2+). Substrate is bound by residues glutamate 62, 91–92 (ND), 117–119 (STS), serine 122, and glutamine 169. Positions 169 and 177 each coordinate Zn(2+).

It belongs to the SIS family. GmhA subfamily. As to quaternary structure, homotetramer. Requires Zn(2+) as cofactor.

Its subcellular location is the cytoplasm. It catalyses the reaction 2 D-sedoheptulose 7-phosphate = D-glycero-alpha-D-manno-heptose 7-phosphate + D-glycero-beta-D-manno-heptose 7-phosphate. It functions in the pathway carbohydrate biosynthesis; D-glycero-D-manno-heptose 7-phosphate biosynthesis; D-glycero-alpha-D-manno-heptose 7-phosphate and D-glycero-beta-D-manno-heptose 7-phosphate from sedoheptulose 7-phosphate: step 1/1. Catalyzes the isomerization of sedoheptulose 7-phosphate in D-glycero-D-manno-heptose 7-phosphate. This is Phosphoheptose isomerase from Aliarcobacter butzleri (strain RM4018) (Arcobacter butzleri).